Here is a 130-residue protein sequence, read N- to C-terminus: DNA-directed RNA polymerase subunit omega (130 aa).

Positions glutamate 110–glutamate 130 are disordered.

The protein belongs to the RNA polymerase subunit omega family. In terms of assembly, the RNAP catalytic core consists of 2 alpha, 1 beta, 1 beta' and 1 omega subunit. When a sigma factor is associated with the core the holoenzyme is formed, which can initiate transcription.

The catalysed reaction is RNA(n) + a ribonucleoside 5'-triphosphate = RNA(n+1) + diphosphate. Functionally, promotes RNA polymerase assembly. Latches the N- and C-terminal regions of the beta' subunit thereby facilitating its interaction with the beta and alpha subunits. The sequence is that of DNA-directed RNA polymerase subunit omega from Afipia carboxidovorans (strain ATCC 49405 / DSM 1227 / KCTC 32145 / OM5) (Oligotropha carboxidovorans).